A 210-amino-acid chain; its full sequence is Tissue inhibitor of metalloproteinase (210 aa).

A signal peptide spans 1–27; the sequence is MDLRKHLGLLTLLLVAVFAFYGRPADA. Cysteine 28 serves as a coordination point for Zn(2+). 2 involved in metalloproteinase-binding regions span residues 28 to 31 and 93 to 94; these read CSCM and DA. 5 disulfide bridges follow: cysteine 28-cysteine 96, cysteine 30-cysteine 118, cysteine 145-cysteine 195, cysteine 150-cysteine 155, and cysteine 165-cysteine 180. Residues 28–145 enclose the NTR domain; that stretch reads CSCMPSHPQT…SGGYAKATNC (118 aa).

This sequence belongs to the protease inhibitor I35 (TIMP) family. Expressed in heads of female and male adult flies. Expressed at the time of eclosion in unopened wings of adult flies. Strongly expressed at the tip of ovarian germarium region 1 where germline stem cells (GSCs) and cystoblasts reside and in region 2 of the germarium.

The protein localises to the secreted. In terms of biological role, metalloproteinase inhibitor that acts on both matrix metalloproteinases Mmp1 and Mmp2 in vitro. Complexes with metalloproteinases and irreversibly inactivates them by binding to their catalytic zinc cofactor. Required for wing maturation which is the final step in morphogenesis of the adult fly. Involved in the negative regulation of developmental tissue invasion for imaginal disk eversion during metamorphosis by inhibiting Mmp-mediated basement membrane (BM) degradation. Required for oogenesis and for the long-term maintainance of germarial structure and shape in the adult ovaries. Required for maintaining composition and biophysical properties of the extracellular matrix (ECM), and for the normal organization and cyst production of the germline stem cell (GSC) niche. The sequence is that of Tissue inhibitor of metalloproteinase from Drosophila melanogaster (Fruit fly).